A 545-amino-acid polypeptide reads, in one-letter code: Thermosome subunit alpha (545 aa).

The protein belongs to the TCP-1 chaperonin family. As to quaternary structure, forms a Heterooligomeric complex of two stacked eight-membered rings.

In terms of biological role, molecular chaperone; binds unfolded polypeptides in vitro, and has a weak ATPase activity. This Archaeoglobus fulgidus (strain ATCC 49558 / DSM 4304 / JCM 9628 / NBRC 100126 / VC-16) protein is Thermosome subunit alpha (thsA).